The sequence spans 326 residues: Tetraketide alpha-pyrone reductase 1 (326 aa).

NADP(+) contacts are provided by residues 8–32, Lys-44, and Tyr-162; that span reads VCVTGASGFLASWLVKRLLLEGYEV.

It belongs to the NAD(P)-dependent epimerase/dehydratase family. Dihydroflavonol-4-reductase subfamily. In terms of assembly, interacts with 4CLL1/ACOS5, PKSA and PKSB. Specifically expressed in anther tapetal cells during microspores development.

The protein resides in the cytoplasm. It is found in the nucleus. Its subcellular location is the endoplasmic reticulum. Its function is as follows. Involved in the biosynthesis of hydroxylated tetraketide compounds that serve as sporopollenin precursors (the main constituents of exine). Is essential for pollen wall development. Acts on tetraketide alpha-pyrones and reduces the carbonyl function on the tetraketide alkyl chain to a secondary alcohol function. The protein is Tetraketide alpha-pyrone reductase 1 (TKPR1) of Arabidopsis thaliana (Mouse-ear cress).